The chain runs to 169 residues: NAD(P)H-quinone oxidoreductase subunit 6, chloroplastic (169 aa).

A run of 5 helical transmembrane segments spans residues 7–27, 29–49, 58–78, 90–110, and 139–159; these read FSSAALTTGILLGCLGVIFLP, IVYAAFLLGAVFFCLAGIYVL, AQVLVYVGAINVLILFAIMLV, SPPLIPGIACIGLLGVLVQMI, and LLAFEVMSLVLLVALVGAIVL.

The protein belongs to the complex I subunit 6 family. As to quaternary structure, NDH is composed of at least 16 different subunits, 5 of which are encoded in the nucleus.

The protein resides in the plastid. It localises to the chloroplast thylakoid membrane. The catalysed reaction is a plastoquinone + NADH + (n+1) H(+)(in) = a plastoquinol + NAD(+) + n H(+)(out). It catalyses the reaction a plastoquinone + NADPH + (n+1) H(+)(in) = a plastoquinol + NADP(+) + n H(+)(out). In terms of biological role, NDH shuttles electrons from NAD(P)H:plastoquinone, via FMN and iron-sulfur (Fe-S) centers, to quinones in the photosynthetic chain and possibly in a chloroplast respiratory chain. The immediate electron acceptor for the enzyme in this species is believed to be plastoquinone. Couples the redox reaction to proton translocation, and thus conserves the redox energy in a proton gradient. This is NAD(P)H-quinone oxidoreductase subunit 6, chloroplastic (ndhG) from Nephroselmis olivacea (Green alga).